A 233-amino-acid polypeptide reads, in one-letter code: Protein DEHYDRATION-INDUCED 19 homolog 2 (233 aa).

The segment at 176–215 (DLHSDSSDNNFLLNKFPDDKTAERAEPSLSEKDQKERAQR) is disordered. Positions 191–214 (FPDDKTAERAEPSLSEKDQKERAQ) are enriched in basic and acidic residues.

It belongs to the Di19 family.

This chain is Protein DEHYDRATION-INDUCED 19 homolog 2 (DI19-2), found in Oryza sativa subsp. japonica (Rice).